The sequence spans 109 residues: Large ribosomal subunit protein uL24 (109 aa).

It belongs to the universal ribosomal protein uL24 family. Part of the 50S ribosomal subunit.

Its function is as follows. One of two assembly initiator proteins, it binds directly to the 5'-end of the 23S rRNA, where it nucleates assembly of the 50S subunit. In terms of biological role, one of the proteins that surrounds the polypeptide exit tunnel on the outside of the subunit. This Ehrlichia chaffeensis (strain ATCC CRL-10679 / Arkansas) protein is Large ribosomal subunit protein uL24.